Reading from the N-terminus, the 176-residue chain is NAD(P)H-quinone oxidoreductase subunit 6, chloroplastic (176 aa).

Transmembrane regions (helical) follow at residues 10 to 30, 32 to 52, 61 to 81, 92 to 112, and 152 to 172; these read FLLV…VLLT, PIYS…FYIL, AQLL…VMFM, LWTI…VSLI, and FFLP…GAIA.

It belongs to the complex I subunit 6 family. NDH is composed of at least 16 different subunits, 5 of which are encoded in the nucleus.

It localises to the plastid. Its subcellular location is the chloroplast thylakoid membrane. It carries out the reaction a plastoquinone + NADH + (n+1) H(+)(in) = a plastoquinol + NAD(+) + n H(+)(out). The catalysed reaction is a plastoquinone + NADPH + (n+1) H(+)(in) = a plastoquinol + NADP(+) + n H(+)(out). Its function is as follows. NDH shuttles electrons from NAD(P)H:plastoquinone, via FMN and iron-sulfur (Fe-S) centers, to quinones in the photosynthetic chain and possibly in a chloroplast respiratory chain. The immediate electron acceptor for the enzyme in this species is believed to be plastoquinone. Couples the redox reaction to proton translocation, and thus conserves the redox energy in a proton gradient. This is NAD(P)H-quinone oxidoreductase subunit 6, chloroplastic (ndhG) from Gossypium hirsutum (Upland cotton).